The primary structure comprises 207 residues: Large ribosomal subunit protein bL25 (207 aa).

Belongs to the bacterial ribosomal protein bL25 family. CTC subfamily. In terms of assembly, part of the 50S ribosomal subunit; part of the 5S rRNA/L5/L18/L25 subcomplex. Contacts the 5S rRNA. Binds to the 5S rRNA independently of L5 and L18.

Its function is as follows. This is one of the proteins that binds to the 5S RNA in the ribosome where it forms part of the central protuberance. The chain is Large ribosomal subunit protein bL25 from Bordetella petrii (strain ATCC BAA-461 / DSM 12804 / CCUG 43448).